Consider the following 361-residue polypeptide: Phosphoserine aminotransferase (361 aa).

Serine 9 and arginine 42 together coordinate L-glutamate. Pyridoxal 5'-phosphate is bound by residues 76 to 77 (AR), tryptophan 102, threonine 153, aspartate 173, and glutamine 196. Lysine 197 is modified (N6-(pyridoxal phosphate)lysine). Residue 238-239 (NT) participates in pyridoxal 5'-phosphate binding.

The protein belongs to the class-V pyridoxal-phosphate-dependent aminotransferase family. SerC subfamily. In terms of assembly, homodimer. Pyridoxal 5'-phosphate is required as a cofactor.

It localises to the cytoplasm. The enzyme catalyses O-phospho-L-serine + 2-oxoglutarate = 3-phosphooxypyruvate + L-glutamate. It carries out the reaction 4-(phosphooxy)-L-threonine + 2-oxoglutarate = (R)-3-hydroxy-2-oxo-4-phosphooxybutanoate + L-glutamate. The protein operates within amino-acid biosynthesis; L-serine biosynthesis; L-serine from 3-phospho-D-glycerate: step 2/3. It participates in cofactor biosynthesis; pyridoxine 5'-phosphate biosynthesis; pyridoxine 5'-phosphate from D-erythrose 4-phosphate: step 3/5. Its function is as follows. Catalyzes the reversible conversion of 3-phosphohydroxypyruvate to phosphoserine and of 3-hydroxy-2-oxo-4-phosphonooxybutanoate to phosphohydroxythreonine. This Erwinia tasmaniensis (strain DSM 17950 / CFBP 7177 / CIP 109463 / NCPPB 4357 / Et1/99) protein is Phosphoserine aminotransferase.